A 576-amino-acid chain; its full sequence is DNA mismatch repair protein MutL (576 aa).

It belongs to the DNA mismatch repair MutL/HexB family.

This protein is involved in the repair of mismatches in DNA. It is required for dam-dependent methyl-directed DNA mismatch repair. May act as a 'molecular matchmaker', a protein that promotes the formation of a stable complex between two or more DNA-binding proteins in an ATP-dependent manner without itself being part of a final effector complex. This Chlamydia trachomatis serovar L2 (strain ATCC VR-902B / DSM 19102 / 434/Bu) protein is DNA mismatch repair protein MutL.